Here is a 448-residue protein sequence, read N- to C-terminus: uncharacterized protein (448 aa).

Over residues Ser-187–Gly-198 the composition is skewed to basic and acidic residues. Disordered regions lie at residues Ser-187–Arg-221, Leu-243–Met-270, and Leu-291–Gly-361. Over residues Leu-243 to Ser-261 the composition is skewed to low complexity. Basic and acidic residues predominate over residues Phe-307–Arg-334.

This sequence to M.tuberculosis Rv0025 and Rv0739.

This is an uncharacterized protein from Mycobacterium tuberculosis (strain CDC 1551 / Oshkosh).